The primary structure comprises 343 residues: L-ornithine/L-arginine 3-hydroxylase (343 aa).

Fe cation is bound by residues His147 and Glu149. Polar residues predominate over residues 199 to 215; sequence MPDNSHLPQNTAESTGD. Positions 199–218 are disordered; the sequence is MPDNSHLPQNTAESTGDPTK. His302 contacts Fe cation. Residue Arg316 coordinates 2-oxoglutarate.

Belongs to the clavaminate synthase family. It depends on Fe(2+) as a cofactor.

The catalysed reaction is L-ornithine + 2-oxoglutarate + O2 = (3S)-3-hydroxy-L-ornithine + succinate + CO2. It carries out the reaction L-arginine + 2-oxoglutarate + O2 = (2S,3S)-hydroxyarginine + succinate + CO2. Its function is as follows. Alpha-ketoglutarate-dependent dioxygenase that in vitro catalyzes the regio- and stereoselective hydroxylation of L-ornithine and L-arginine, leading to (3S)-3-hydroxy-L-ornithine and (3S)-3-hydroxy-L-arginine, respectively. Cannot use L-lysine, D-ornithine, or D-arginine as substrate. The polypeptide is L-ornithine/L-arginine 3-hydroxylase (Catenulispora acidiphila (strain DSM 44928 / JCM 14897 / NBRC 102108 / NRRL B-24433 / ID139908)).